The following is a 494-amino-acid chain: Catalase isozyme 2 (494 aa).

Positions M1 to N29 are disordered. The span at P8–G22 shows a compositional bias: polar residues. Active-site residues include H65 and N138. Y348 is a binding site for heme.

It belongs to the catalase family. As to quaternary structure, homotetramer. Heme serves as cofactor.

It is found in the peroxisome. The protein localises to the glyoxysome. The catalysed reaction is 2 H2O2 = O2 + 2 H2O. Occurs in almost all aerobically respiring organisms and serves to protect cells from the toxic effects of hydrogen peroxide. In Hordeum vulgare (Barley), this protein is Catalase isozyme 2 (CAT2).